A 974-amino-acid polypeptide reads, in one-letter code: Hexokinase-1 (974 aa).

The disordered stretch occupies residues Met-1–Leu-42. Residues Cys-57–Glu-66 are mitochondrial-binding peptide (MBP). Hexokinase domains lie at Pro-72 to Ala-514 and Ala-520 to Ala-962. ATP contacts are provided by residues Arg-86 and Asp-140–Ser-145. The segment at Asp-129–Val-263 is hexokinase small subdomain 1. Asp-140–Arg-147 contributes to the D-glucose 6-phosphate binding site. D-glucose-binding positions include Ser-211, Thr-228–Lys-229, and Asn-264–Asp-265. The segment at Asn-264–Ser-503 is hexokinase large subdomain 1. D-glucose 6-phosphate-binding residues include Asp-265 and Thr-288. D-glucose contacts are provided by residues Asn-291, Glu-316, and Gln-347–Glu-350. Ser-393 carries the phosphoserine modification. Asp-469–Ser-471 contacts D-glucose 6-phosphate. Residue Arg-481–Arg-482 coordinates ATP. D-glucose 6-phosphate contacts are provided by residues Ser-505 and Asp-588–Thr-592. The interval Asp-577–Val-711 is hexokinase small subdomain 2. Asp-588–Asn-593 is a binding site for ATP. Residues Ser-659–Phe-660, Thr-676–Lys-677, and Asn-712–Asp-713 each bind D-glucose. Positions Asn-712 to Asp-951 are hexokinase large subdomain 2. Residues Asp-713 and Thr-736 each coordinate D-glucose 6-phosphate. Thr-736 lines the ATP pocket. D-glucose is bound by residues Ser-738–Asn-739, Glu-764, and Glu-798. ATP-binding positions include Gly-803–Met-804, Thr-840–Ser-844, and Thr-919–Leu-923. D-glucose 6-phosphate-binding positions include Asp-917–Thr-919 and Ser-953.

It belongs to the hexokinase family. Monomer. Interacts with RABL2/RABL2A; binds preferentially to GTP-bound RABL2. Interacts with VDAC1. The HK1-VDAC1 complex interacts with ATF2. Interacts (via N-terminal spermatogenic cell-specific region) with PFKM isoform 2 and isoform 3 (via C-terminus). Interacts with SMAD5. Tyrosine-phosphorylated. In terms of tissue distribution, in rapidly growing tumor cells exhibiting high glucose catabolic rates, isoform HK1 is markedly elevated. Isoform HK1-SA, isoform HK1-SB and isoform HK1-SC are found only in spermatogenic cells. Isoform HK1-SC is detected in round spermatids, condensing spermatids and mature sperm where it is found in the head membranes, mitochondria of the midpiece and the fibrous sheath of the flagellum. Expressed within the principal piece and midpiece of sperm tail (at protein level).

The protein localises to the mitochondrion outer membrane. The protein resides in the cytoplasm. Its subcellular location is the cytosol. It is found in the membrane. The enzyme catalyses a D-hexose + ATP = a D-hexose 6-phosphate + ADP + H(+). The catalysed reaction is D-fructose + ATP = D-fructose 6-phosphate + ADP + H(+). It carries out the reaction D-glucose + ATP = D-glucose 6-phosphate + ADP + H(+). It catalyses the reaction D-mannose + ATP = D-mannose 6-phosphate + ADP + H(+). The enzyme catalyses D-glucosamine + ATP = D-glucosamine 6-phosphate + ADP + H(+). The protein operates within carbohydrate metabolism; hexose metabolism. It functions in the pathway carbohydrate degradation; glycolysis; D-glyceraldehyde 3-phosphate and glycerone phosphate from D-glucose: step 1/4. With respect to regulation, hexokinase is an allosteric enzyme inhibited by its product D-glucose 6-phosphate. Hexokinase activity is inhibited by N-acetyl-D-glucosamine. Catalyzes the phosphorylation of various hexoses, such as D-glucose, D-glucosamine, D-fructose, D-mannose and 2-deoxy-D-glucose, to hexose 6-phosphate (D-glucose 6-phosphate, D-glucosamine 6-phosphate, D-fructose 6-phosphate, D-mannose 6-phosphate and 2-deoxy-D-glucose 6-phosphate, respectively). Does not phosphorylate N-acetyl-D-glucosamine. Mediates the initial step of glycolysis by catalyzing phosphorylation of D-glucose to D-glucose 6-phosphate. Involved in innate immunity and inflammation by acting as a pattern recognition receptor for bacterial peptidoglycan. When released in the cytosol, N-acetyl-D-glucosamine component of bacterial peptidoglycan inhibits the hexokinase activity of HK1 and causes its dissociation from mitochondrial outer membrane, thereby activating the NLRP3 inflammasome. This chain is Hexokinase-1, found in Mus musculus (Mouse).